The chain runs to 239 residues: MQFSIVYFLVFLIPSTQSTGFLSLKLTSDHDCLVHLEIQSMEYSETVRLLAYETKSLEIFTPEITNQLSIHFQILHHFSGVSLSDVSSQLFKLDNNGIWEPRVIDSDQVILSIQSNFHCQKGFYGPICERRSRSTSTIKTTTSIPTATSSPFHLPISEVQINNLIIYAVLSSVVLLLIIANCFLCFCRPKPSKYIDYTFQNVFPMDEFFPMEKTIGSPDTEYFDSSSRYYSTITLQSRV.

Functionally, may have a role in mesendoderm development during embryogenesis. In Caenorhabditis briggsae, this protein is Skn-1 dependent zygotic transcript 1 protein.